Consider the following 375-residue polypeptide: tRNA-specific 2-thiouridylase MnmA (375 aa).

Residues G12–S19 and M38 contribute to the ATP site. The interval N98–D100 is interaction with target base in tRNA. C103 serves as the catalytic Nucleophile. A disulfide bridge connects residues C103 and C200. G127 serves as a coordination point for ATP. The tract at residues K150 to Q152 is interaction with tRNA. C200 functions as the Cysteine persulfide intermediate in the catalytic mechanism. Positions R312–Y313 are interaction with tRNA.

Belongs to the MnmA/TRMU family.

The protein resides in the cytoplasm. The enzyme catalyses S-sulfanyl-L-cysteinyl-[protein] + uridine(34) in tRNA + AH2 + ATP = 2-thiouridine(34) in tRNA + L-cysteinyl-[protein] + A + AMP + diphosphate + H(+). Its function is as follows. Catalyzes the 2-thiolation of uridine at the wobble position (U34) of tRNA, leading to the formation of s(2)U34. The chain is tRNA-specific 2-thiouridylase MnmA from Lactobacillus delbrueckii subsp. bulgaricus (strain ATCC 11842 / DSM 20081 / BCRC 10696 / JCM 1002 / NBRC 13953 / NCIMB 11778 / NCTC 12712 / WDCM 00102 / Lb 14).